The sequence spans 146 residues: MORN repeat-containing protein 4 (146 aa).

MORN repeat units lie at residues 16-38 (YRGE…DGGT), 39-61 (YLGH…DGSR), 62-84 (YEGE…DNMT), and 85-107 (FEGE…DGSH).

In terms of assembly, interacts with MYO3A. As to expression, retina.

It localises to the cytoplasm. Its subcellular location is the cell projection. It is found in the filopodium tip. The protein localises to the stereocilium. Plays a role in promoting axonal degeneration following neuronal injury by toxic insult or trauma. The polypeptide is MORN repeat-containing protein 4 (MORN4) (Bos taurus (Bovine)).